The chain runs to 146 residues: Neutral phospholipase A2 B (146 aa).

The N-terminal stretch at 1–21 is a signal peptide; sequence MNPAHLLILAAVCVSPLGASS. A propeptide spanning residues 22-27 is cleaved from the precursor; it reads NRPMPL. 7 cysteine pairs are disulfide-bonded: C38–C98, C53–C145, C55–C71, C70–C126, C77–C119, C87–C112, and C105–C117. Ca(2+)-binding residues include Y54, G56, and G58. H74 is an active-site residue. D75 is a Ca(2+) binding site. D120 is an active-site residue.

This sequence belongs to the phospholipase A2 family. Group I subfamily. D49 sub-subfamily. The cofactor is Ca(2+). In terms of tissue distribution, expressed by the venom gland.

The protein resides in the secreted. The enzyme catalyses a 1,2-diacyl-sn-glycero-3-phosphocholine + H2O = a 1-acyl-sn-glycero-3-phosphocholine + a fatty acid + H(+). Its function is as follows. PLA2 catalyzes the calcium-dependent hydrolysis of the 2-acyl groups in 3-sn-phosphoglycerides. This chain is Neutral phospholipase A2 B, found in Naja sputatrix (Malayan spitting cobra).